The chain runs to 330 residues: Ferredoxin--NADP reductase (330 aa).

FAD is bound by residues Glu-34, Gln-42, Tyr-47, Val-87, Phe-121, Asp-285, and Ser-325.

The protein belongs to the ferredoxin--NADP reductase type 2 family. As to quaternary structure, homodimer. FAD serves as cofactor.

It catalyses the reaction 2 reduced [2Fe-2S]-[ferredoxin] + NADP(+) + H(+) = 2 oxidized [2Fe-2S]-[ferredoxin] + NADPH. This chain is Ferredoxin--NADP reductase, found in Limosilactobacillus fermentum (strain NBRC 3956 / LMG 18251) (Lactobacillus fermentum).